A 429-amino-acid polypeptide reads, in one-letter code: Trigger factor (429 aa).

The region spanning 164–249 (GDWAVIDHEG…LKALKVRQAP (86 aa)) is the PPIase FKBP-type domain.

Belongs to the FKBP-type PPIase family. Tig subfamily.

It localises to the cytoplasm. It catalyses the reaction [protein]-peptidylproline (omega=180) = [protein]-peptidylproline (omega=0). Involved in protein export. Acts as a chaperone by maintaining the newly synthesized protein in an open conformation. Functions as a peptidyl-prolyl cis-trans isomerase. The sequence is that of Trigger factor from Anaeromyxobacter dehalogenans (strain 2CP-C).